A 336-amino-acid chain; its full sequence is Aspartate carbamoyltransferase catalytic subunit (336 aa).

2 residues coordinate carbamoyl phosphate: Arg71 and Thr72. Lys99 provides a ligand contact to L-aspartate. Residues Arg121, His151, and Gln154 each contribute to the carbamoyl phosphate site. L-aspartate is bound by residues Arg184 and Arg239. Carbamoyl phosphate-binding residues include Gly280 and Pro281.

Belongs to the aspartate/ornithine carbamoyltransferase superfamily. ATCase family. In terms of assembly, heterododecamer (2C3:3R2) of six catalytic PyrB chains organized as two trimers (C3), and six regulatory PyrI chains organized as three dimers (R2).

The enzyme catalyses carbamoyl phosphate + L-aspartate = N-carbamoyl-L-aspartate + phosphate + H(+). It participates in pyrimidine metabolism; UMP biosynthesis via de novo pathway; (S)-dihydroorotate from bicarbonate: step 2/3. In terms of biological role, catalyzes the condensation of carbamoyl phosphate and aspartate to form carbamoyl aspartate and inorganic phosphate, the committed step in the de novo pyrimidine nucleotide biosynthesis pathway. The polypeptide is Aspartate carbamoyltransferase catalytic subunit (Azotobacter vinelandii (strain DJ / ATCC BAA-1303)).